We begin with the raw amino-acid sequence, 510 residues long: uncharacterized protein (510 aa).

The first 19 residues, Met1–Ser19, serve as a signal peptide directing secretion. Residues Ile28–Ala48 form a helical membrane-spanning segment.

It localises to the host membrane. This is an uncharacterized protein from Sulfolobus islandicus rod-shaped virus 1 (SIRV-1).